Here is a 429-residue protein sequence, read N- to C-terminus: Neuronal pentraxin-2 (429 aa).

The first 14 residues, Met1–Ala14, serve as a signal peptide directing secretion. Residues Asn146 and Asn187 are each glycosylated (N-linked (GlcNAc...) asparagine). Residues Asp221 to Cys422 form the Pentraxin (PTX) domain. A disulfide bridge links Cys251 with Cys311. Positions 275, 353, 354, 355, and 365 each coordinate Ca(2+). Residue Asn391 is glycosylated (N-linked (GlcNAc...) asparagine).

Homooligomer or heterooligomer (probably pentamer) with neuronal pentraxin receptor (NPTXR). The cofactor is Ca(2+).

The protein localises to the secreted. Its function is as follows. Likely to play role in the modification of cellular properties that underlie long-term plasticity. Binds to agar matrix in a calcium-dependent manner. The protein is Neuronal pentraxin-2 (Nptx2) of Mus musculus (Mouse).